The primary structure comprises 265 residues: Lipopolysaccharide core heptose(I) kinase WaaP (265 aa).

Residue Asp-162 is part of the active site.

This sequence belongs to the protein kinase superfamily. KdkA/RfaP family. The cofactor is Mg(2+).

The catalysed reaction is an L-alpha-D-Hep-(1-&gt;3)-L-alpha-D-Hep-(1-&gt;5)-[alpha-Kdo-(2-&gt;4)]-alpha-Kdo-(2-&gt;6)-lipid A + ATP = an L-alpha-D-Hep-(1-&gt;3)-4-O-phospho-L-alpha-D-Hep-(1-&gt;5)-[alpha-Kdo-(2-&gt;4)]-alpha-Kdo-(2-&gt;6)-lipid A + ADP + H(+). It carries out the reaction L-alpha-D-Hep-(1-&gt;3)-L-alpha-D-Hep-(1-&gt;5)-[alpha-Kdo-(2-&gt;4)]-alpha-Kdo-(2-&gt;6)-lipid A (E. coli) + ATP = L-alpha-D-Hep-(1-&gt;3)-4-O-phospho-L-alpha-D-Hep-(1-&gt;5)-[alpha-Kdo-(2-&gt;4)]-alpha-Kdo-(2-&gt;6)-lipid A (E. coli) + ADP + H(+). It functions in the pathway bacterial outer membrane biogenesis; LPS core biosynthesis. Kinase involved in the biosynthesis of the core oligosaccharide region of lipopolysaccharide (LPS). Catalyzes the phosphorylation of heptose I (HepI), the first heptose added to the Kdo2-lipid A module. This chain is Lipopolysaccharide core heptose(I) kinase WaaP, found in Escherichia coli (strain K12).